The chain runs to 320 residues: Ferrochelatase (320 aa).

Residues histidine 194 and glutamate 275 each coordinate Fe cation.

It belongs to the ferrochelatase family.

Its subcellular location is the cytoplasm. It carries out the reaction heme b + 2 H(+) = protoporphyrin IX + Fe(2+). It participates in porphyrin-containing compound metabolism; protoheme biosynthesis; protoheme from protoporphyrin-IX: step 1/1. Its function is as follows. Catalyzes the ferrous insertion into protoporphyrin IX. The polypeptide is Ferrochelatase (Xylella fastidiosa (strain 9a5c)).